We begin with the raw amino-acid sequence, 80 residues long: UPF0291 protein llmg_1475 (80 aa).

Belongs to the UPF0291 family.

It localises to the cytoplasm. The chain is UPF0291 protein llmg_1475 from Lactococcus lactis subsp. cremoris (strain MG1363).